The sequence spans 270 residues: MRSCGILQGKALLDELEERKKRKIIKTEEIKVLYGILTFYTMYDLEKFNSLFDYAEVMQPNIELITDEFVRTAYSGRIKEGLSYAYLMQDNIDKSREICHEILNFKDDKNCFSLLRASALVYLAESYTFESYERASWYINKSLETLELCQSERANRRKENVLNTYAFIKLVNRQGLDSISIYHPAEESFFEIVKGNYKKAEIILNNIKNENGSLKPIEYCYLGLATNDITLLEKSIELFECEGNRFYCKFPKKMLVNLSKNGTMCEGGAK.

This is an uncharacterized protein from Bacillus anthracis.